The primary structure comprises 228 residues: 5'-methylthioadenosine/S-adenosylhomocysteine nucleosidase (228 aa).

The active-site Proton acceptor is the glutamate 11. Substrate contacts are provided by residues glycine 77, isoleucine 151, and 172-173 (ME). Aspartate 196 (proton donor) is an active-site residue.

The protein belongs to the PNP/UDP phosphorylase family. MtnN subfamily.

It catalyses the reaction S-adenosyl-L-homocysteine + H2O = S-(5-deoxy-D-ribos-5-yl)-L-homocysteine + adenine. The enzyme catalyses S-methyl-5'-thioadenosine + H2O = 5-(methylsulfanyl)-D-ribose + adenine. The catalysed reaction is 5'-deoxyadenosine + H2O = 5-deoxy-D-ribose + adenine. It participates in amino-acid biosynthesis; L-methionine biosynthesis via salvage pathway; S-methyl-5-thio-alpha-D-ribose 1-phosphate from S-methyl-5'-thioadenosine (hydrolase route): step 1/2. In terms of biological role, catalyzes the irreversible cleavage of the glycosidic bond in both 5'-methylthioadenosine (MTA) and S-adenosylhomocysteine (SAH/AdoHcy) to adenine and the corresponding thioribose, 5'-methylthioribose and S-ribosylhomocysteine, respectively. Also cleaves 5'-deoxyadenosine, a toxic by-product of radical S-adenosylmethionine (SAM) enzymes, into 5-deoxyribose and adenine. This Staphylococcus saprophyticus subsp. saprophyticus (strain ATCC 15305 / DSM 20229 / NCIMB 8711 / NCTC 7292 / S-41) protein is 5'-methylthioadenosine/S-adenosylhomocysteine nucleosidase.